The chain runs to 217 residues: Cyclin-P2-1 (217 aa).

This sequence belongs to the cyclin family. Cyclin U/P subfamily.

The chain is Cyclin-P2-1 (CYCP2-1) from Oryza sativa subsp. japonica (Rice).